The chain runs to 354 residues: tRNA N6-adenosine threonylcarbamoyltransferase (354 aa).

2 residues coordinate Fe cation: histidine 111 and histidine 115. Substrate contacts are provided by residues 134-138 (LVSGG), aspartate 167, glycine 180, and asparagine 279. Aspartate 319 contacts Fe cation.

Belongs to the KAE1 / TsaD family. Fe(2+) is required as a cofactor.

The protein localises to the cytoplasm. The catalysed reaction is L-threonylcarbamoyladenylate + adenosine(37) in tRNA = N(6)-L-threonylcarbamoyladenosine(37) in tRNA + AMP + H(+). Required for the formation of a threonylcarbamoyl group on adenosine at position 37 (t(6)A37) in tRNAs that read codons beginning with adenine. Is involved in the transfer of the threonylcarbamoyl moiety of threonylcarbamoyl-AMP (TC-AMP) to the N6 group of A37, together with TsaE and TsaB. TsaD likely plays a direct catalytic role in this reaction. This Neisseria meningitidis serogroup A / serotype 4A (strain DSM 15465 / Z2491) protein is tRNA N6-adenosine threonylcarbamoyltransferase.